A 181-amino-acid polypeptide reads, in one-letter code: Protein Syd (181 aa).

The protein belongs to the Syd family.

It is found in the cell inner membrane. Functionally, interacts with the SecY protein in vivo. May bind preferentially to an uncomplexed state of SecY, thus functioning either as a chelating agent for excess SecY in the cell or as a regulatory factor that negatively controls the translocase function. The polypeptide is Protein Syd (Escherichia coli O157:H7).